The sequence spans 148 residues: uncharacterized protein (148 aa).

One can recognise an N-acetyltransferase domain in the interval 8-148 (QVMQEPELKI…DGFLTLILRN (141 aa)).

The protein belongs to the acetyltransferase family.

This is an uncharacterized protein from Bacillus subtilis (strain 168).